The following is a 116-amino-acid chain: MAGRSGDSDEDLLKTVRLIKFLYQSNPPPSLEGTRQARRNRRRRWRERQRQIRSISERILGTFLGRFEEPVPLPLPPLEKLTLDCNEDCGTSGTQGVGSPQILVESPAILEPGTKE.

Serine 5 and serine 8 each carry phosphoserine; by host CK2. Residues 18 to 26 form a homomultimerization region; the sequence is LIKFLYQSN. The disordered stretch occupies residues 25-49; that stretch reads SNPPPSLEGTRQARRNRRRRWRERQ. Positions 34-50 match the Nuclear localization signal and RNA-binding (RRE) motif; that stretch reads TRQARRNRRRRWRERQR. A compositionally biased stretch (basic residues) spans 36 to 47; sequence QARRNRRRRWRE. Residues 73–84 carry the Nuclear export signal and binding to XPO1 motif; the sequence is LPLPPLEKLTLD. Phosphoserine; by host is present on residues serine 92 and serine 99. The disordered stretch occupies residues 92–116; that stretch reads SGTQGVGSPQILVESPAILEPGTKE.

Belongs to the HIV-1 REV protein family. Homomultimer; when bound to the RRE. Multimeric assembly is essential for activity and may involve XPO1. Binds to human KPNB1, XPO1, TNPO1, RANBP5 and IPO7. Interacts with the viral Integrase. Interacts with human KHDRBS1. Interacts with human NAP1; this interaction decreases Rev multimerization and stimulates its activity. Interacts with human DEAD-box helicases DDX3 and DDX24; these interactions may serve for viral RNA export to the cytoplasm and packaging, respectively. Interacts with human PSIP1; this interaction may inhibit HIV-1 DNA integration by promoting dissociation of the Integrase-LEDGF/p75 complex. In terms of processing, asymmetrically arginine dimethylated at one site by host PRMT6. Methylation impairs the RNA-binding activity and export of viral RNA from the nucleus to the cytoplasm. Phosphorylated by protein kinase CK2. Presence of, and maybe binding to the N-terminus of the regulatory beta subunit of CK2 is necessary for CK2-mediated Rev's phosphorylation.

It localises to the host nucleus. The protein localises to the host nucleolus. Its subcellular location is the host cytoplasm. Its function is as follows. Escorts unspliced or incompletely spliced viral pre-mRNAs (late transcripts) out of the nucleus of infected cells. These pre-mRNAs carry a recognition sequence called Rev responsive element (RRE) located in the env gene, that is not present in fully spliced viral mRNAs (early transcripts). This function is essential since most viral proteins are translated from unspliced or partially spliced pre-mRNAs which cannot exit the nucleus by the pathway used by fully processed cellular mRNAs. Rev itself is translated from a fully spliced mRNA that readily exits the nucleus. Rev's nuclear localization signal (NLS) binds directly to KPNB1/Importin beta-1 without previous binding to KPNA1/Importin alpha-1. KPNB1 binds to the GDP bound form of RAN (Ran-GDP) and targets Rev to the nucleus. In the nucleus, the conversion from Ran-GDP to Ran-GTP dissociates Rev from KPNB1 and allows Rev's binding to the RRE in viral pre-mRNAs. Rev multimerization on the RRE via cooperative assembly exposes its nuclear export signal (NES) to the surface. Rev can then form a complex with XPO1/CRM1 and Ran-GTP, leading to nuclear export of the complex. Conversion from Ran-GTP to Ran-GDP mediates dissociation of the Rev/RRE/XPO1/RAN complex, so that Rev can return to the nucleus for a subsequent round of export. Beside KPNB1, also seems to interact with TNPO1/Transportin-1, RANBP5/IPO5 and IPO7/RANBP7 for nuclear import. The nucleoporin-like HRB/RIP is an essential cofactor that probably indirectly interacts with Rev to release HIV RNAs from the perinuclear region to the cytoplasm. The chain is Protein Rev from Human immunodeficiency virus type 1 group M subtype B (strain 89.6) (HIV-1).